A 157-amino-acid polypeptide reads, in one-letter code: Crossover junction endodeoxyribonuclease RuvC (157 aa).

Residues Asp7, Glu67, and Asp140 contribute to the active site. Residues Asp7, Glu67, and Asp140 each contribute to the Mg(2+) site.

Belongs to the RuvC family. Homodimer which binds Holliday junction (HJ) DNA. The HJ becomes 2-fold symmetrical on binding to RuvC with unstacked arms; it has a different conformation from HJ DNA in complex with RuvA. In the full resolvosome a probable DNA-RuvA(4)-RuvB(12)-RuvC(2) complex forms which resolves the HJ. Mg(2+) is required as a cofactor.

The protein resides in the cytoplasm. The catalysed reaction is Endonucleolytic cleavage at a junction such as a reciprocal single-stranded crossover between two homologous DNA duplexes (Holliday junction).. The RuvA-RuvB-RuvC complex processes Holliday junction (HJ) DNA during genetic recombination and DNA repair. Endonuclease that resolves HJ intermediates. Cleaves cruciform DNA by making single-stranded nicks across the HJ at symmetrical positions within the homologous arms, yielding a 5'-phosphate and a 3'-hydroxyl group; requires a central core of homology in the junction. The consensus cleavage sequence is 5'-(A/T)TT(C/G)-3'. Cleavage occurs on the 3'-side of the TT dinucleotide at the point of strand exchange. HJ branch migration catalyzed by RuvA-RuvB allows RuvC to scan DNA until it finds its consensus sequence, where it cleaves and resolves the cruciform DNA. The polypeptide is Crossover junction endodeoxyribonuclease RuvC (Rickettsia typhi (strain ATCC VR-144 / Wilmington)).